Here is a 182-residue protein sequence, read N- to C-terminus: NADH-quinone oxidoreductase subunit I (182 aa).

2 consecutive 4Fe-4S ferredoxin-type domains span residues 52–82 and 92–121; these read LTRD…LQKA and EFFR…LTPD. [4Fe-4S] cluster contacts are provided by cysteine 62, cysteine 65, cysteine 68, cysteine 72, cysteine 101, cysteine 104, cysteine 107, and cysteine 111.

Belongs to the complex I 23 kDa subunit family. NDH-1 is composed of 13 different subunits. Subunits NuoA, H, J, K, L, M, N constitute the membrane sector of the complex. [4Fe-4S] cluster serves as cofactor.

It localises to the cell inner membrane. It carries out the reaction a quinone + NADH + 5 H(+)(in) = a quinol + NAD(+) + 4 H(+)(out). Its function is as follows. NDH-1 shuttles electrons from NADH, via FMN and iron-sulfur (Fe-S) centers, to quinones in the respiratory chain. The immediate electron acceptor for the enzyme in this species is believed to be ubiquinone. Couples the redox reaction to proton translocation (for every two electrons transferred, four hydrogen ions are translocated across the cytoplasmic membrane), and thus conserves the redox energy in a proton gradient. The sequence is that of NADH-quinone oxidoreductase subunit I from Pseudomonas aeruginosa (strain LESB58).